The primary structure comprises 362 residues: Spermidine/putrescine import ATP-binding protein PotA (362 aa).

The ABC transporter domain occupies 6–236 (VELKHVGKRY…PVNHFVADFI (231 aa)). Residue 38–45 (GPSGSGKT) coordinates ATP.

It belongs to the ABC transporter superfamily. Spermidine/putrescine importer (TC 3.A.1.11.1) family. In terms of assembly, the complex is composed of two ATP-binding proteins (PotA), two transmembrane proteins (PotB and PotC) and a solute-binding protein (PotD).

The protein resides in the cell membrane. The catalysed reaction is ATP + H2O + polyamine-[polyamine-binding protein]Side 1 = ADP + phosphate + polyamineSide 2 + [polyamine-binding protein]Side 1.. Its function is as follows. Part of the ABC transporter complex PotABCD involved in spermidine/putrescine import. Responsible for energy coupling to the transport system. In Lacticaseibacillus paracasei (strain ATCC 334 / BCRC 17002 / CCUG 31169 / CIP 107868 / KCTC 3260 / NRRL B-441) (Lactobacillus paracasei), this protein is Spermidine/putrescine import ATP-binding protein PotA.